A 491-amino-acid polypeptide reads, in one-letter code: Monocarboxylate transport permease protein (491 aa).

13 helical membrane-spanning segments follow: residues 7–27 (GTAL…GFVA), 55–75 (WFLV…PALV), 83–103 (FFAL…MPVL), 130–150 (LAVA…QLVG), 157–177 (ALGL…ALYT), 187–207 (LIAF…VALI), 246–266 (LALG…GIFA), 277–297 (AIML…GYMG), 322–342 (WFSG…AAVM), 374–396 (ITSL…QFAL), 400–422 (LLGG…TNWF), 427–447 (LLAG…DAGW), and 465–485 (GLLA…LLPA).

It belongs to the sodium:solute symporter (SSF) (TC 2.A.21) family.

Its subcellular location is the cell membrane. With respect to regulation, inhibited by CCCP, but is apparently not affected by the concentration of sodium. Low-affinity transporter of alanine and high-affinity transporter of lactate and pyruvate. Can also transport other monocarboxylates such as propionate, butyrate, alpha-hydroxybutyrate or acetate. May be proton coupled. Required for optimal growth on alanine or pyruvate and ammonia. The protein is Monocarboxylate transport permease protein of Rhizobium johnstonii (strain DSM 114642 / LMG 32736 / 3841) (Rhizobium leguminosarum bv. viciae).